A 150-amino-acid chain; its full sequence is 3-dehydroquinate dehydratase (150 aa).

Tyr-26 acts as the Proton acceptor in catalysis. 3 residues coordinate substrate: Asn-77, His-83, and Asp-90. His-103 functions as the Proton donor in the catalytic mechanism. Substrate-binding positions include 104 to 105 (LS) and Arg-114.

This sequence belongs to the type-II 3-dehydroquinase family. Homododecamer.

It catalyses the reaction 3-dehydroquinate = 3-dehydroshikimate + H2O. The protein operates within metabolic intermediate biosynthesis; chorismate biosynthesis; chorismate from D-erythrose 4-phosphate and phosphoenolpyruvate: step 3/7. Its function is as follows. Catalyzes a trans-dehydration via an enolate intermediate. The polypeptide is 3-dehydroquinate dehydratase (Pectobacterium atrosepticum (strain SCRI 1043 / ATCC BAA-672) (Erwinia carotovora subsp. atroseptica)).